The chain runs to 155 residues: Endoribonuclease YbeY (155 aa).

Zn(2+)-binding residues include H115, H119, and H125.

The protein belongs to the endoribonuclease YbeY family. The cofactor is Zn(2+).

The protein localises to the cytoplasm. In terms of biological role, single strand-specific metallo-endoribonuclease involved in late-stage 70S ribosome quality control and in maturation of the 3' terminus of the 16S rRNA. This is Endoribonuclease YbeY from Polynucleobacter asymbioticus (strain DSM 18221 / CIP 109841 / QLW-P1DMWA-1) (Polynucleobacter necessarius subsp. asymbioticus).